Here is a 122-residue protein sequence, read N- to C-terminus: Serum amyloid A-3 protein (122 aa).

The first 18 residues, M1 to S18, serve as a signal peptide directing secretion. The disordered stretch occupies residues T87–Y122.

This sequence belongs to the SAA family. Found in various tissues.

It localises to the secreted. Major acute phase reactant. Apolipoprotein of the HDL complex. In vitro exhibits antimicrobial activity against Escherichia coli, Streptococcus uberis and Pseudomonas aeruginosa. This chain is Serum amyloid A-3 protein (Saa3), found in Mus musculus (Mouse).